Consider the following 465-residue polypeptide: Chromosomal replication initiator protein DnaA (465 aa).

Residues 1–84 (MSLSLWQQCL…RFEVGSKPLV (84 aa)) are domain I, interacts with DnaA modulators. The tract at residues 84–128 (VQTISQPAQSHHNPVSVARQQPVRMAPVRPSWDNSPVQAEHTYRS) is domain II. Residues 129-345 (NVNPKHTFDN…GALNRVIANA (217 aa)) are domain III, AAA+ region. Positions 173, 175, 176, and 177 each coordinate ATP. A domain IV, binds dsDNA region spans residues 346-465 (NFTGRSITID…FSNLIRTLSS (120 aa)).

Belongs to the DnaA family. Oligomerizes as a right-handed, spiral filament on DNA at oriC.

It localises to the cytoplasm. In terms of biological role, plays an essential role in the initiation and regulation of chromosomal replication. ATP-DnaA binds to the origin of replication (oriC) to initiate formation of the DNA replication initiation complex once per cell cycle. Binds the DnaA box (a 9 base pair repeat at the origin) and separates the double-stranded (ds)DNA. Forms a right-handed helical filament on oriC DNA; dsDNA binds to the exterior of the filament while single-stranded (ss)DNA is stabiized in the filament's interior. The ATP-DnaA-oriC complex binds and stabilizes one strand of the AT-rich DNA unwinding element (DUE), permitting loading of DNA polymerase. After initiation quickly degrades to an ADP-DnaA complex that is not apt for DNA replication. Binds acidic phospholipids. This chain is Chromosomal replication initiator protein DnaA, found in Pectobacterium atrosepticum (strain SCRI 1043 / ATCC BAA-672) (Erwinia carotovora subsp. atroseptica).